A 2907-amino-acid polypeptide reads, in one-letter code: Fibrillin-2 (2907 aa).

An N-terminal signal peptide occupies residues 1-28 (MGRRRRLCLQPYFVWLGCVALWAQGTDG). The interval 26–58 (TDGQPQPPPPKTLRPQPPPQQVRPAVAGSEGGF) is disordered. A propeptide spanning residues 29 to 77 (QPQPPPPKTLRPQPPPQQVRPAVAGSEGGFMGPEYRDEGAVAASRVRRR) is cleaved from the precursor. The span at 30 to 46 (PQPPPPKTLRPQPPPQQ) shows a compositional bias: pro residues. EGF-like domains follow at residues 111–142 (IVPI…PTCG), 145–176 (SIQQ…TYCG), and 176–208 (GQPV…PQCE). Cystine bridges form between Cys-115–Cys-124, Cys-119–Cys-130, Cys-132–Cys-141, Cys-149–Cys-159, Cys-153–Cys-164, Cys-166–Cys-175, Cys-180–Cys-190, Cys-184–Cys-196, and Cys-198–Cys-207. The interval 149-359 (CSVRCMNGGT…VTSTDGSRCI (211 aa)) is interaction with MFAP4. A TB 1 domain is found at 214–266 (GPCFTQVNNQMCQGQLTGIVCTKTLCCATIGRAWGHPCEMCPAQPQPCRRGFI). The EGF-like 4; calcium-binding domain occupies 276-317 (DVDECQAIPGLCQGGNCINTVGSFECRCPAGHKQSETTQKCE). Cystine bridges form between Cys-280–Cys-292, Cys-287–Cys-301, Cys-303–Cys-316, Cys-322–Cys-334, Cys-329–Cys-343, and Cys-345–Cys-358. A glycan (O-linked (Glc) serine) is linked at Ser-298. The EGF-like 5; calcium-binding domain occupies 318–359 (DIDECSVIPGVCETGDCSNTVGSYFCLCPRGFVTSTDGSRCI). Ser-340 carries an O-linked (Glc) serine glycan. One can recognise a TB 2 domain in the interval 364–417 (GTCFSGLVNGRCAQELPGRMAKAQCCCEPGRCWSIGTIPEACPVRGSEEYRRLC). N-linked (GlcNAc...) asparagine glycosylation is present at Asn-485. The EGF-like 6 domain occupies 487 to 527 (TIDICKHHANLCLNGRCIPTVSSYRCECNMGYKQDANGDCI). Disulfide bonds link Cys-491–Cys-503, Cys-498–Cys-512, Cys-514–Cys-526, Cys-532–Cys-542, Cys-537–Cys-551, Cys-553–Cys-566, Cys-572–Cys-584, Cys-579–Cys-593, Cys-595–Cys-608, Cys-614–Cys-625, Cys-620–Cys-634, Cys-636–Cys-649, Cys-655–Cys-666, Cys-661–Cys-675, and Cys-677–Cys-690. An O-linked (Glc) serine glycan is attached at Ser-509. The EGF-like 7; calcium-binding domain occupies 528 to 567 (DVDECTSNPCSNGDCVNTPGSYYCKCHAGFQRTPTKQACI). An O-linked (Glc) serine glycan is attached at Ser-548. The EGF-like 8; calcium-binding domain maps to 568-609 (DIDECIQNGVLCKNGRCVNTDGSFQCICNAGFELTTDGKNCV). Residue Ser-590 is glycosylated (O-linked (Glc) serine). An EGF-like 9; calcium-binding domain is found at 610–650 (DHDECTTTNMCLNGMCINEDGSFKCVCKPGFILAPNGRYCT). Ser-631 carries an O-linked (Glc) serine glycan. One can recognise an EGF-like 10; calcium-binding domain in the interval 651–691 (DVDECQTPGICMNGHCINNEGSFRCDCPPGLAVGVDGRVCV). O-linked (Glc) serine glycosylation occurs at Ser-672. Positions 697 to 749 (STCYGEIKKGVCVRPFPGAVTKSECCCANPDYGFGEPCQPCPAKNSAEFHGLC) constitute a TB 3 domain. In terms of domain architecture, EGF-like 11; calcium-binding spans 761–802 (DINECALDPDICANGICENLRGSYRCNCNSGYEPDASGRNCI). 9 disulfide bridges follow: Cys-765–Cys-777, Cys-772–Cys-786, Cys-788–Cys-801, Cys-807–Cys-819, Cys-814–Cys-828, Cys-830–Cys-843, Cys-849–Cys-859, Cys-854–Cys-868, and Cys-870–Cys-883. The region spanning 803–844 (DIDECLVNRLLCDNGLCRNTPGSYSCTCPPGYVFRTETETCE) is the EGF-like 12; calcium-binding domain. An O-linked (Glc) serine glycan is attached at Ser-825. One can recognise an EGF-like 13; calcium-binding domain in the interval 845-883 (DVNECESNPCVNGACRNNLGSFHCECSPGSKLSSTGLIC). Residue Ser-865 is glycosylated (O-linked (Glc) serine). One can recognise a TB 4 domain in the interval 889–940 (GTCWLNIQDNRCEVNINGATLKSECCATLGAAWGSPCERCELDAACPRGFAR). The 42-residue stretch at 948-989 (DVNECEVFPGVCPNGRCVNSKGSFHCECPEGLTLDGTGRVCL) folds into the EGF-like 14; calcium-binding domain. 3 disulfides stabilise this stretch: Cys-952–Cys-964, Cys-959–Cys-973, and Cys-975–Cys-988. The O-linked (Glc) serine glycan is linked to Ser-970. The region spanning 994–1045 (EHCFLKWDEDECIHPVPGKFRMDACCCAVGAAWGTECEECPKPGTKEYETLC) is the TB 5 domain. Positions 1066-1107 (DINECKAFPGMCTYGKCRNTIGSFKCRCNNGFALDMEERNCT) constitute an EGF-like 15; calcium-binding domain. 36 cysteine pairs are disulfide-bonded: Cys-1070–Cys-1082, Cys-1077–Cys-1091, Cys-1093–Cys-1106, Cys-1112–Cys-1124, Cys-1119–Cys-1133, Cys-1135–Cys-1149, Cys-1155–Cys-1167, Cys-1162–Cys-1176, Cys-1178–Cys-1191, Cys-1197–Cys-1209, Cys-1204–Cys-1218, Cys-1220–Cys-1233, Cys-1239–Cys-1250, Cys-1246–Cys-1259, Cys-1261–Cys-1274, Cys-1280–Cys-1292, Cys-1287–Cys-1301, Cys-1303–Cys-1316, Cys-1322–Cys-1334, Cys-1329–Cys-1343, Cys-1345–Cys-1358, Cys-1364–Cys-1377, Cys-1371–Cys-1386, Cys-1388–Cys-1399, Cys-1405–Cys-1418, Cys-1412–Cys-1427, Cys-1429–Cys-1440, Cys-1446–Cys-1458, Cys-1453–Cys-1467, Cys-1469–Cys-1482, Cys-1488–Cys-1499, Cys-1494–Cys-1508, Cys-1510–Cys-1523, Cys-1529–Cys-1540, Cys-1535–Cys-1549, and Cys-1551–Cys-1564. Ser-1088 carries an O-linked (Glc) serine glycan. Asn-1105 carries an N-linked (GlcNAc...) asparagine glycan. The 43-residue stretch at 1108 to 1150 (DIDECRISPDLCGSGICVNTPGSFECECFEGYESGFMMMKNCM) folds into the EGF-like 16; calcium-binding domain. An EGF-like 17; calcium-binding domain is found at 1151 to 1192 (DIDECERNPLLCRGGTCVNTEGSFQCDCPLGHELSPSREDCV). O-linked (Glc) serine glycosylation is present at Ser-1173. An EGF-like 18; calcium-binding domain is found at 1193–1234 (DINECSLSDNLCRNGKCVNMIGTYQCSCNPGYQATPDRQGCT). O-linked (Glc) threonine glycosylation occurs at Thr-1215. The 41-residue stretch at 1235–1275 (DIDECMIMNGGCDTQCTNSEGSYECSCSEGYALMPDGRSCA) folds into the EGF-like 19; calcium-binding domain. Ser-1256 carries an O-linked (Glc) serine glycan. Positions 1276-1317 (DIDECENNPDICDGGQCTNIPGEYRCLCYDGFMASMDMKTCI) constitute an EGF-like 20; calcium-binding domain. The EGF-like 21; calcium-binding domain maps to 1318–1359 (DVNECDLNPNICMFGECENTKGSFICHCQLGYSVKKGTTGCT). O-linked (Glc) serine glycosylation is present at Ser-1340. The 41-residue stretch at 1360 to 1400 (DVDECEIGAHNCDMHASCLNVPGSFKCSCREGWVGNGIKCI) folds into the EGF-like 22; calcium-binding domain. A glycan (O-linked (Glc) serine) is linked at Ser-1383. An EGF-like 23; calcium-binding domain is found at 1401 to 1441 (DLDECANGTHQCSINAQCVNTPGSYRCACSEGFTGDGFTCS). An N-linked (GlcNAc...) asparagine glycan is attached at Asn-1407. The 42-residue stretch at 1442 to 1483 (DVDECAENTNLCENGQCLNVPGAYRCECEMGFTPASDSRSCQ) folds into the EGF-like 24; calcium-binding domain. One can recognise an EGF-like 25; calcium-binding domain in the interval 1484 to 1524 (DIDECSFQNICVFGTCNNLPGMFHCICDDGYELDRTGGNCT). Asn-1522 is a glycosylation site (N-linked (GlcNAc...) asparagine). Residues 1525-1565 (DIDECADPINCVNGLCVNTPGRYECNCPPDFQLNPTGVGCV) form the EGF-like 26; calcium-binding domain. In terms of domain architecture, TB 6 spans 1570–1626 (GNCYLKFGPRGDGSLSCNTEVGVGVSRSSCCCSLGKAWGNPCETCPPVNSTEYYTLC). Asn-1618 carries N-linked (GlcNAc...) asparagine glycosylation. Positions 1643-1684 (DIDECQELPGLCQGGNCINTFGSFQCECPQGYYLSEETRICE) constitute an EGF-like 27; calcium-binding domain. Intrachain disulfides connect Cys-1647–Cys-1659, Cys-1654–Cys-1668, Cys-1670–Cys-1683, Cys-1689–Cys-1701, Cys-1696–Cys-1710, and Cys-1712–Cys-1725. Residue Ser-1665 is glycosylated (O-linked (Glc) serine). The EGF-like 28; calcium-binding domain occupies 1685–1726 (DIDECFAHPGVCGPGTCYNTLGNYTCICPPEYMQVNGGHNCM). An N-linked (GlcNAc...) asparagine glycan is attached at Asn-1707. The interaction with MFAP4 stretch occupies residues 1728–2164 (MRKSFCYRSY…VPSLHDTRED (437 aa)). A TB 7 domain is found at 1731–1784 (SFCYRSYNGTTCENELPFNVTKRMCCCTYNVGKAWNKPCEPCPTPGTADFKTIC). 2 N-linked (GlcNAc...) asparagine glycosylation sites follow: Asn-1738 and Asn-1749. The 42-residue stretch at 1801–1842 (DIDECKEIPGICANGVCINQIGSFRCECPTGFSYNDLLLVCE) folds into the EGF-like 29; calcium-binding domain. Cystine bridges form between Cys-1805/Cys-1817, Cys-1812/Cys-1826, Cys-1828/Cys-1841, Cys-1847/Cys-1860, Cys-1854/Cys-1869, Cys-1871/Cys-1883, Cys-1889/Cys-1901, Cys-1896/Cys-1910, Cys-1912/Cys-1925, Cys-1931/Cys-1941, Cys-1936/Cys-1950, Cys-1952/Cys-1964, Cys-1970/Cys-1983, Cys-1978/Cys-1992, Cys-1994/Cys-2007, Cys-2013/Cys-2025, Cys-2020/Cys-2034, Cys-2036/Cys-2047, Cys-2053/Cys-2065, Cys-2060/Cys-2074, and Cys-2076/Cys-2089. Positions 1843-1884 (DIDECSNGDNLCQRNADCINSPGSYRCECAAGFKLSPNGACV) constitute an EGF-like 30; calcium-binding domain. An O-linked (Glc) serine glycan is attached at Ser-1866. Residues 1885–1926 (DRNECLEIPNVCSHGLCVDLQGSYQCICNNGFKASQDQTMCM) form the EGF-like 31; calcium-binding domain. One can recognise an EGF-like 32; calcium-binding domain in the interval 1927–1965 (DVDECERHPCGNGTCKNTVGSYNCLCYPGFELTHNNDCL). Asn-1938 is a glycosylation site (N-linked (GlcNAc...) asparagine). A glycan (O-linked (Glc) serine) is linked at Ser-1947. Positions 1966-2008 (DIDECSSFFGQVCRNGRCFNEIGSFKCLCNEGYELTPDGKNCI) constitute an EGF-like 33; calcium-binding domain. O-linked (Glc) serine glycosylation occurs at Ser-1989. The region spanning 2009 to 2048 (DTNECVALPGSCSPGTCQNLEGSFRCICPPGYEVRSENCI) is the EGF-like 34; calcium-binding domain. Residues 2049-2090 (DINECDEDPNICLFGSCTNTPGGFQCICPPGFVLSDNGRRCF) form the EGF-like 35; calcium-binding domain. One can recognise a TB 8 domain in the interval 2095-2148 (SFCFTNFENGKCSVPKAFNTTKAKCCCSKMPGEGWGDPCELCPKDDEVAFQDLC). Residue Asn-2113 is glycosylated (N-linked (GlcNAc...) asparagine). Residues 2164–2205 (DVNECLESPGICSNGQCINTDGSFRCECPMGYNLDYTGVRCV) form the EGF-like 36; calcium-binding domain. Intrachain disulfides connect Cys-2168/Cys-2180, Cys-2175/Cys-2189, Cys-2191/Cys-2204, Cys-2210/Cys-2221, Cys-2216/Cys-2230, Cys-2232/Cys-2244, Cys-2250/Cys-2261, Cys-2257/Cys-2270, Cys-2272/Cys-2285, Cys-2291/Cys-2305, Cys-2298/Cys-2314, Cys-2316/Cys-2329, Cys-2335/Cys-2347, Cys-2342/Cys-2356, and Cys-2358/Cys-2371. Ser-2186 carries an O-linked (Glc) serine glycan. The region spanning 2206–2245 (DTDECSIGNPCGNGTCTNVIGSFECTCNEGFEPGPMMNCE) is the EGF-like 37; calcium-binding domain. Asn-2218 carries an N-linked (GlcNAc...) asparagine glycan. Residues 2246–2286 (DINECAQNPLLCAFRCMNTFGSYECTCPVGYALREDQKMCK) form the EGF-like 38; calcium-binding domain. Ser-2267 is a glycosylation site (O-linked (Glc) serine). The EGF-like 39; calcium-binding domain occupies 2287–2330 (DLDECAEGLHDCESRGMMCKNLIGTFMCICPPGMARRPDGEGCV). An EGF-like 40; calcium-binding domain is found at 2331–2372 (DENECRTKPGICENGRCVNIIGSYRCECNEGFQSSSSGTECL). Ser-2353 carries O-linked (Glc) serine glycosylation. The 54-residue stretch at 2377–2430 (GLCFAEVLQTMCQMASSSRNLVTKSECCCDGGRGWGHQCELCPLPGTAQYKKIC) folds into the TB 9 domain. Positions 2442–2483 (DIDECKVMPSLCTNGQCVNTMGSFRCFCKVGYTTDISGTACV) constitute an EGF-like 41; calcium-binding domain. Intrachain disulfides connect Cys-2446–Cys-2458, Cys-2453–Cys-2467, Cys-2469–Cys-2482, Cys-2488–Cys-2499, Cys-2495–Cys-2508, Cys-2510–Cys-2523, Cys-2529–Cys-2540, Cys-2536–Cys-2549, Cys-2551–Cys-2562, Cys-2568–Cys-2581, Cys-2575–Cys-2590, Cys-2592–Cys-2605, Cys-2611–Cys-2621, Cys-2617–Cys-2630, Cys-2632–Cys-2645, Cys-2651–Cys-2662, Cys-2657–Cys-2671, Cys-2673–Cys-2686, Cys-2692–Cys-2703, Cys-2699–Cys-2712, and Cys-2714–Cys-2726. Ser-2464 carries O-linked (Glc) serine glycosylation. The EGF-like 42; calcium-binding domain occupies 2484–2524 (DLDECSQSPKPCNFICKNTKGSYQCSCPRGYVLQEDGKTCK). Ser-2505 carries an O-linked (Glc) serine glycan. In terms of domain architecture, EGF-like 43; calcium-binding spans 2525-2563 (DLDECQTKQHNCQFLCVNTLGGFTCKCPPGFTQHHTACI). An EGF-like 44; calcium-binding domain is found at 2564–2606 (DNNECGSQPSLCGAKGICQNTPGSFSCECQRGFSLDASGLNCE). The O-linked (Glc) serine glycan is linked to Ser-2587. The 40-residue stretch at 2607-2646 (DVDECDGNHRCQHGCQNILGGYRCGCPQGYVQHYQWNQCV) folds into the EGF-like 45; calcium-binding domain. One can recognise an EGF-like 46; calcium-binding domain in the interval 2647-2687 (DENECSNPGACGSASCYNTLGSYKCACPSGFSFDQFSSACH). The O-linked (Glc) serine glycan is linked to Ser-2668. In terms of domain architecture, EGF-like 47; calcium-binding spans 2688–2727 (DVNECSSSKNPCSYGCSNTEGGYLCGCPPGYFRVGQGHCV). Asn-2803 carries N-linked (GlcNAc...) asparagine glycosylation.

This sequence belongs to the fibrillin family. In terms of assembly, interacts with BMP2, BMP4, BMP7, BMP10 and GDF5. Interacts with MFAP2 and MFAP5. Interacts with ADAMTSL5. Interacts with MFAP4. In terms of processing, N-glycosylated. Post-translationally, O-glycosylated on serine residues by POGLUT2 and POGLUT3. Widely expressed.

It localises to the secreted. The protein localises to the extracellular space. It is found in the extracellular matrix. Functionally, fibrillins are structural components of 10-12 nm extracellular calcium-binding microfibrils, which occur either in association with elastin or in elastin-free bundles. Fibrillin-2-containing microfibrils regulate the early process of elastic fiber assembly. Regulates osteoblast maturation by controlling TGF-beta bioavailability and calibrating TGF-beta and BMP levels, respectively. Its function is as follows. Hormone secreted by trophoblasts that promotes trophoblast invasiveness. Has glucogenic activity: is able to increase plasma glucose levels. The protein is Fibrillin-2 of Mus musculus (Mouse).